The sequence spans 163 residues: Small heat shock protein C1 (163 aa).

Positions 55–163 constitute a sHSP domain; the sequence is TFYESSSLKS…EQDSREITIN (109 aa).

Belongs to the small heat shock protein (HSP20) family.

This chain is Small heat shock protein C1 (hspC1), found in Rickettsia prowazekii (strain Madrid E).